The following is a 384-amino-acid chain: Glucans biosynthesis protein C (384 aa).

The next 10 membrane-spanning stretches (helical) occupy residues 17–37, 54–74, 91–111, 140–160, 173–193, 212–232, 240–260, 274–294, 311–331, and 338–358; these read AWLM…THSW, FIHA…SYML, VGIP…ILLQ, LWFL…FTWF, AISL…YAAI, FIVM…LAFI, FTTP…AYLL, TESV…FSLG, ASLF…AYIT, and LIGF…LYEI.

This sequence belongs to the acyltransferase 3 family. OpgC subfamily.

It is found in the cell membrane. The protein operates within glycan metabolism; osmoregulated periplasmic glucan (OPG) biosynthesis. Functionally, necessary for the succinyl substitution of periplasmic glucans. Could catalyze the transfer of succinyl residues from the cytoplasmic side of the membrane to the nascent glucan backbones on the periplasmic side of the membrane. The polypeptide is Glucans biosynthesis protein C (Salmonella heidelberg (strain SL476)).